The primary structure comprises 183 residues: NADH-quinone oxidoreductase subunit B 2 (183 aa).

4 residues coordinate [4Fe-4S] cluster: cysteine 47, cysteine 48, cysteine 113, and cysteine 142.

The protein belongs to the complex I 20 kDa subunit family. In terms of assembly, NDH-1 is composed of 14 different subunits. Subunits NuoB, C, D, E, F, and G constitute the peripheral sector of the complex. It depends on [4Fe-4S] cluster as a cofactor.

The protein resides in the cell inner membrane. The enzyme catalyses a quinone + NADH + 5 H(+)(in) = a quinol + NAD(+) + 4 H(+)(out). Functionally, NDH-1 shuttles electrons from NADH, via FMN and iron-sulfur (Fe-S) centers, to quinones in the respiratory chain. The immediate electron acceptor for the enzyme in this species is believed to be ubiquinone. Couples the redox reaction to proton translocation (for every two electrons transferred, four hydrogen ions are translocated across the cytoplasmic membrane), and thus conserves the redox energy in a proton gradient. The protein is NADH-quinone oxidoreductase subunit B 2 of Anaeromyxobacter sp. (strain Fw109-5).